Consider the following 331-residue polypeptide: Hyaluronidase B (331 aa).

Intrachain disulfides connect Cys19-Cys308 and Cys185-Cys197. The N-linked (GlcNAc...) asparagine glycan is linked to Asn79. Glu109 acts as the Proton donor in catalysis.

Belongs to the glycosyl hydrolase 56 family. In terms of tissue distribution, expressed by the venom gland.

It is found in the secreted. It carries out the reaction Random hydrolysis of (1-&gt;4)-linkages between N-acetyl-beta-D-glucosamine and D-glucuronate residues in hyaluronate.. Hydrolyzes high molecular weight hyaluronic acid to produce small oligosaccharides. The protein is Hyaluronidase B of Vespa velutina (Asian yellow-legged hornet).